The following is a 198-amino-acid chain: MQYPEPIAKLIESYMKLPGIGNKTATRLAFYTIDMNEDDVTNFAKNLISARRDLHYCSVCGNITDEDPCEICRDTARSQEMILVVEQPKDVMSMERMNDYHGLYHVLHGVLSPIEGKGPDDINIANLIKRLQKTPAKEVIIATNATPEGEATAMYISRLIKPAGIKVTRLAHGLAVGSDIEYADEMTLLKAVEGRQEI.

The segment at 57–72 adopts a C4-type zinc-finger fold; sequence CSVCGNITDEDPCEIC. The region spanning 80 to 175 is the Toprim domain; sequence EMILVVEQPK…KVTRLAHGLA (96 aa).

Belongs to the RecR family.

Functionally, may play a role in DNA repair. It seems to be involved in an RecBC-independent recombinational process of DNA repair. It may act with RecF and RecO. The protein is Recombination protein RecR of Latilactobacillus sakei subsp. sakei (strain 23K) (Lactobacillus sakei subsp. sakei).